A 332-amino-acid chain; its full sequence is Cilia- and flagella-associated protein 119 (332 aa).

Polar residues predominate over residues 1 to 10; it reads MITPRSSQSL. Disordered stretches follow at residues 1–70, 246–271, and 308–332; these read MITP…ANLF, EDEE…EAEQ, and RLSN…SKAK. A compositionally biased stretch (basic and acidic residues) spans 14-30; it reads VQTELEHSPKLQEEPDR. The span at 49–58 shows a compositional bias: polar residues; the sequence is ESPAEATSSP. Positions 287–308 form a coiled coil; that stretch reads LNKELRQLQQLVEERLKESEER.

Specifically expressed in testis (at protein level).

Its subcellular location is the cell projection. The protein localises to the cilium. It is found in the flagellum. It localises to the cytoplasmic vesicle. The protein resides in the secretory vesicle. Its subcellular location is the acrosome. The protein localises to the cytoplasm. This chain is Cilia- and flagella-associated protein 119, found in Rattus norvegicus (Rat).